Reading from the N-terminus, the 342-residue chain is MLEQQFAAEIQHIIDNKTKPLGALGQLEQVALQLALIQSQGKEQAATHIELKQPQMLLFAGDHGVADEGVSIAPSAVTQQMVLNFLAGGAAINCFCALHSIDLTVVDCGILLPVDSDAPNLILRRLGSRTANFAFESAMTIEQVEQALRNGQQIAAEKIAQGADLLMFGEMGIANTSSAAALLSALSGHEVDHCVGRGTGINEEQLSHKIKVVAQGVGRCEGLSVNAILAEVGGFEIVTMAGAFIAAAEHKTPVLVDGFIVSVAAYIATLLKPEVRDYLLFAHRSEEQGHQIVLSLLEAKPLLDLGLRLGEGTGAALAYPLLKAAAQFYNNMASFESAGVTV.

Catalysis depends on Glu-311, which acts as the Proton acceptor.

It belongs to the CobT family.

It catalyses the reaction 5,6-dimethylbenzimidazole + nicotinate beta-D-ribonucleotide = alpha-ribazole 5'-phosphate + nicotinate + H(+). The protein operates within nucleoside biosynthesis; alpha-ribazole biosynthesis; alpha-ribazole from 5,6-dimethylbenzimidazole: step 1/2. Catalyzes the synthesis of alpha-ribazole-5'-phosphate from nicotinate mononucleotide (NAMN) and 5,6-dimethylbenzimidazole (DMB). This is Nicotinate-nucleotide--dimethylbenzimidazole phosphoribosyltransferase from Vibrio vulnificus (strain CMCP6).